The chain runs to 298 residues: Ribosomal RNA small subunit methyltransferase A (298 aa).

Asparagine 35, leucine 37, glycine 62, glutamate 83, aspartate 108, and asparagine 133 together coordinate S-adenosyl-L-methionine.

This sequence belongs to the class I-like SAM-binding methyltransferase superfamily. rRNA adenine N(6)-methyltransferase family. RsmA subfamily.

The protein resides in the cytoplasm. The enzyme catalyses adenosine(1518)/adenosine(1519) in 16S rRNA + 4 S-adenosyl-L-methionine = N(6)-dimethyladenosine(1518)/N(6)-dimethyladenosine(1519) in 16S rRNA + 4 S-adenosyl-L-homocysteine + 4 H(+). Functionally, specifically dimethylates two adjacent adenosines (A1518 and A1519) in the loop of a conserved hairpin near the 3'-end of 16S rRNA in the 30S particle. May play a critical role in biogenesis of 30S subunits. The chain is Ribosomal RNA small subunit methyltransferase A from Streptococcus pyogenes serotype M4 (strain MGAS10750).